The sequence spans 477 residues: 3-isopropylmalate dehydratase large subunit (477 aa).

[4Fe-4S] cluster contacts are provided by Cys-352, Cys-413, and Cys-416.

It belongs to the aconitase/IPM isomerase family. LeuC type 1 subfamily. In terms of assembly, heterodimer of LeuC and LeuD. [4Fe-4S] cluster is required as a cofactor.

It carries out the reaction (2R,3S)-3-isopropylmalate = (2S)-2-isopropylmalate. It functions in the pathway amino-acid biosynthesis; L-leucine biosynthesis; L-leucine from 3-methyl-2-oxobutanoate: step 2/4. Functionally, catalyzes the isomerization between 2-isopropylmalate and 3-isopropylmalate, via the formation of 2-isopropylmaleate. The polypeptide is 3-isopropylmalate dehydratase large subunit (Pseudomonas putida (strain GB-1)).